The chain runs to 90 residues: Probable Fe(2+)-trafficking protein (90 aa).

This sequence belongs to the Fe(2+)-trafficking protein family.

Its function is as follows. Could be a mediator in iron transactions between iron acquisition and iron-requiring processes, such as synthesis and/or repair of Fe-S clusters in biosynthetic enzymes. This chain is Probable Fe(2+)-trafficking protein, found in Nitrosospira multiformis (strain ATCC 25196 / NCIMB 11849 / C 71).